Reading from the N-terminus, the 151-residue chain is UPF0178 protein PST_0536 (151 aa).

It belongs to the UPF0178 family.

In Stutzerimonas stutzeri (strain A1501) (Pseudomonas stutzeri), this protein is UPF0178 protein PST_0536.